A 204-amino-acid chain; its full sequence is Translation initiation factor IF-3 (204 aa).

The disordered stretch occupies residues 169–204; sequence VPKAAPKRDSGRSESAQEAPTARSAEASRPEAPANA.

This sequence belongs to the IF-3 family. In terms of assembly, monomer.

The protein localises to the cytoplasm. IF-3 binds to the 30S ribosomal subunit and shifts the equilibrium between 70S ribosomes and their 50S and 30S subunits in favor of the free subunits, thus enhancing the availability of 30S subunits on which protein synthesis initiation begins. In Deinococcus geothermalis (strain DSM 11300 / CIP 105573 / AG-3a), this protein is Translation initiation factor IF-3.